The primary structure comprises 714 residues: Choline transporter-like protein 5 (714 aa).

Topologically, residues 1 to 33 are cytoplasmic; sequence MGRRSAAPTSPFGEPRKFDPKFKGPIGKRHCTD. A helical transmembrane segment spans residues 34–54; sequence VLCCIIFVVVILGYIALGVVA. The Extracellular portion of the chain corresponds to 55-237; the sequence is WIHGDPRKII…KIFEDYASSW (183 aa). N-linked (GlcNAc...) asparagine glycosylation is found at Asn83, Asn132, Asn192, and Asn205. A helical membrane pass occupies residues 238 to 258; sequence YWILIALFIAMVVSLLFLILL. At 259-261 the chain is on the cytoplasmic side; it reads RFT. Residues 262 to 282 traverse the membrane as a helical segment; that stretch reads AGVFFWIFIIGVIGVVGYGIW. The Extracellular segment spans residues 283–320; the sequence is HCFWEYDSLKGVPGADLTIYDIGLQTDFRVYLQLRQTW. Residues 321–341 traverse the membrane as a helical segment; the sequence is LAFMILLCIVEVIIILMLIFL. Residues 342-346 are Cytoplasmic-facing; sequence RNRIR. A helical transmembrane segment spans residues 347 to 367; that stretch reads IAIALLQEGSRAIGYIMSTLF. Topologically, residues 368–369 are extracellular; sequence YP. The helical transmembrane segment at 370–390 threads the bilayer; that stretch reads IITFILIAICISYWAVTAVFM. Residues 391 to 455 lie on the Cytoplasmic side of the membrane; that stretch reads ATSGEPIYKV…QYILIFQLCN (65 aa). The chain crosses the membrane as a helical span at residues 456–476; the sequence is VFVFLWLVNFSIALGQCTLAG. At 477–510 the chain is on the extracellular side; the sequence is AFASYYWAFKKPADIPACPLFSSFGRAIRYHTGS. The helical transmembrane segment at 511-531 threads the bilayer; sequence LALGSLILALVQFIRIILEYL. The Cytoplasmic portion of the chain corresponds to 532–605; it reads DHKLKASQNS…RVAVLDKVTD (74 aa). The chain crosses the membrane as a helical span at residues 606–626; sequence FLLFLGKVFVTGSVGVLAFFF. Residues 627-644 lie on the Extracellular side of the membrane; sequence FTRKIPVLTDEAPALNYY. The helical transmembrane segment at 645–665 threads the bilayer; it reads WVPLLTVLIGSYLIAHGFFSV. Topologically, residues 666–711 are cytoplasmic; it reads YAMCVDTLFLCFCEDLERNNGSSSKPYYMSPNLHRILGKKEILSKK.

This sequence belongs to the CTL (choline transporter-like) family.

Its subcellular location is the cell membrane. It catalyses the reaction choline(out) + n H(+)(in) = choline(in) + n H(+)(out). Its function is as follows. Choline/H+ antiporter. This is Choline transporter-like protein 5 (slc44a5) from Xenopus tropicalis (Western clawed frog).